A 662-amino-acid polypeptide reads, in one-letter code: Acyl-coenzyme A oxidase acox-1.4 (662 aa).

Residues Tyr148–Thr151, Gly156–Thr157, and Gly190 each bind FAD. Substrate contacts are provided by residues Lys284 to His287 and Arg294. Residues Arg319 and Gln339 to Arg342 each bind FAD. Residues His341, Ser391, His395, and Gln403 each contribute to the ATP site. An FAD-binding site is contributed by Gly410. Position 432–433 (Tyr432–Glu433) interacts with substrate. Catalysis depends on Glu433, which acts as the Proton acceptor. Glu435 is an FAD binding site. ATP is bound by residues Arg526–Arg529 and Tyr574. The Microbody targeting signal motif lies at Ala660–Leu662.

It belongs to the acyl-CoA oxidase family. As to quaternary structure, homodimer. It depends on FAD as a cofactor.

Its subcellular location is the peroxisome. It carries out the reaction asc-C9-CoA + O2 = asc-DeltaC9-CoA + H2O2. Its pathway is lipid metabolism; peroxisomal fatty acid beta-oxidation. Activated by ATP. ATP binding leads to a conformational change that promotes FAD cofactor binding and enzyme activity. ATP binding likely occurs during acox-1.4 folding and/or dimer formation. Involved in the first step of peroxisomal beta-oxidation by catalyzing the desaturation of fatty acid-derived side chains of ascaroside pheromones, which regulates development and behavior. Specifically, shortens ascarosides with a 9-carbon side chain (asc-C9) and, in association with acox-1.1, may contribute to the shortening of ascarosides with a 11-carbon side chain (asc-C11). May contribute to the production of indol-3-carbonyl(IC)-ascarosides in association with acox-1.1 and acox-3. The sequence is that of Acyl-coenzyme A oxidase acox-1.4 from Caenorhabditis elegans.